Consider the following 413-residue polypeptide: Alpha-1-antiproteinase (413 aa).

A signal peptide spans 1 to 24; that stretch reads MTPSISWRLLLLAGLCCLVPSYLA. The residue at position 33 (S33) is a Phosphoserine. Residues N64, N101, and N265 are each glycosylated (N-linked (GlcNAc...) asparagine). The RCL stretch occupies residues 368–387; sequence ATTIVEAVFMSLPPILHFNH. S378 carries the post-translational modification Phosphoserine.

It belongs to the serpin family. As to quaternary structure, interacts with CELA2A. Interacts with ERGIC3 and LMAN1/ERGIC53. Interacts with PRSS1/Trypsin.

It is found in the secreted. Its function is as follows. Inhibitor of serine proteases. The primary target is elastase, but also has a moderate affinity for plasmin and thrombin. The protein is Alpha-1-antiproteinase (Serpina1) of Mus saxicola (Brown spiny mouse).